The chain runs to 192 residues: Adenylate kinase (192 aa).

Position 10 to 15 (10 to 15 (GAGKGT)) interacts with ATP. Residues 30–59 (STGDMLREVIAKETEVGKKAKAIISSGALV) form an NMP region. AMP-binding positions include Thr31, Arg36, 57-59 (ALV), 85-88 (GYPR), and Gln92. An LID region spans residues 126 to 142 (RRVQETVAAGGQVRLDD). Arg127 is a binding site for ATP. AMP contacts are provided by Arg139 and Arg150. ATP is bound at residue Ile178.

It belongs to the adenylate kinase family. As to quaternary structure, monomer.

The protein resides in the cytoplasm. The enzyme catalyses AMP + ATP = 2 ADP. Its pathway is purine metabolism; AMP biosynthesis via salvage pathway; AMP from ADP: step 1/1. Functionally, catalyzes the reversible transfer of the terminal phosphate group between ATP and AMP. Plays an important role in cellular energy homeostasis and in adenine nucleotide metabolism. The chain is Adenylate kinase from Bartonella tribocorum (strain CIP 105476 / IBS 506).